Consider the following 140-residue polypeptide: MIDIKEIREALPHRYPMLLVDRVLEVSEDEIVAIKNVSINEPFFNGHFPEYPVMPGVLIMEALAQTAGVLELSKEENKGKLVFYAGMDKVKFKKQVVPGDQLVMTAKFVKRRGTIAVVEAIAEVDGKLAASGTLTFAIGN.

His-47 is a catalytic residue.

The protein belongs to the thioester dehydratase family. FabZ subfamily.

The protein resides in the cytoplasm. It catalyses the reaction a (3R)-hydroxyacyl-[ACP] = a (2E)-enoyl-[ACP] + H2O. In terms of biological role, involved in unsaturated fatty acids biosynthesis. Catalyzes the dehydration of short chain beta-hydroxyacyl-ACPs and long chain saturated and unsaturated beta-hydroxyacyl-ACPs. The sequence is that of 3-hydroxyacyl-[acyl-carrier-protein] dehydratase FabZ from Streptococcus agalactiae serotype III (strain NEM316).